The sequence spans 94 residues: Putative pterin-4-alpha-carbinolamine dehydratase (94 aa).

Belongs to the pterin-4-alpha-carbinolamine dehydratase family.

It catalyses the reaction (4aS,6R)-4a-hydroxy-L-erythro-5,6,7,8-tetrahydrobiopterin = (6R)-L-erythro-6,7-dihydrobiopterin + H2O. The chain is Putative pterin-4-alpha-carbinolamine dehydratase from Chloroflexus aggregans (strain MD-66 / DSM 9485).